The primary structure comprises 745 residues: Phosphoribosylformylglycinamidine synthase subunit PurL (745 aa).

The active site involves His54. Residues Tyr57 and Lys96 each contribute to the ATP site. Mg(2+) is bound at residue Glu98. Substrate is bound by residues 99–102 and Arg121; that span reads SHNH. The Proton acceptor role is filled by His100. Asp122 contributes to the Mg(2+) binding site. Substrate is bound at residue Gln250. Position 278 (Asp278) interacts with Mg(2+). Residue 322–324 participates in substrate binding; sequence ESQ. ATP-binding residues include Asp503 and Gly540. Asn541 lines the Mg(2+) pocket. Ser543 lines the substrate pocket.

The protein belongs to the FGAMS family. Monomer. Part of the FGAM synthase complex composed of 1 PurL, 1 PurQ and 2 PurS subunits.

Its subcellular location is the cytoplasm. The enzyme catalyses N(2)-formyl-N(1)-(5-phospho-beta-D-ribosyl)glycinamide + L-glutamine + ATP + H2O = 2-formamido-N(1)-(5-O-phospho-beta-D-ribosyl)acetamidine + L-glutamate + ADP + phosphate + H(+). The protein operates within purine metabolism; IMP biosynthesis via de novo pathway; 5-amino-1-(5-phospho-D-ribosyl)imidazole from N(2)-formyl-N(1)-(5-phospho-D-ribosyl)glycinamide: step 1/2. Part of the phosphoribosylformylglycinamidine synthase complex involved in the purines biosynthetic pathway. Catalyzes the ATP-dependent conversion of formylglycinamide ribonucleotide (FGAR) and glutamine to yield formylglycinamidine ribonucleotide (FGAM) and glutamate. The FGAM synthase complex is composed of three subunits. PurQ produces an ammonia molecule by converting glutamine to glutamate. PurL transfers the ammonia molecule to FGAR to form FGAM in an ATP-dependent manner. PurS interacts with PurQ and PurL and is thought to assist in the transfer of the ammonia molecule from PurQ to PurL. The protein is Phosphoribosylformylglycinamidine synthase subunit PurL of Helicobacter hepaticus (strain ATCC 51449 / 3B1).